Here is a 426-residue protein sequence, read N- to C-terminus: Citrate synthase (426 aa).

Residues H314 and D372 contribute to the active site.

Belongs to the citrate synthase family.

The catalysed reaction is oxaloacetate + acetyl-CoA + H2O = citrate + CoA + H(+). Its pathway is carbohydrate metabolism; tricarboxylic acid cycle; isocitrate from oxaloacetate: step 1/2. This chain is Citrate synthase (gltA), found in Helicobacter pylori (strain J99 / ATCC 700824) (Campylobacter pylori J99).